The chain runs to 103 residues: Small ribosomal subunit protein uS10 (103 aa).

It belongs to the universal ribosomal protein uS10 family. As to quaternary structure, part of the 30S ribosomal subunit.

Functionally, involved in the binding of tRNA to the ribosomes. In Neisseria meningitidis serogroup C / serotype 2a (strain ATCC 700532 / DSM 15464 / FAM18), this protein is Small ribosomal subunit protein uS10.